Here is a 66-residue protein sequence, read N- to C-terminus: Large ribosomal subunit protein uL29 (66 aa).

The protein belongs to the universal ribosomal protein uL29 family.

The chain is Large ribosomal subunit protein uL29 from Deinococcus deserti (strain DSM 17065 / CIP 109153 / LMG 22923 / VCD115).